Reading from the N-terminus, the 408-residue chain is Tyrosine--tRNA ligase (408 aa).

A 'HIGH' region motif is present at residues 50–59 (PTGKDLTLGH). Positions 234-238 (KMSKS) match the 'KMSKS' region motif. Lys237 lines the ATP pocket. In terms of domain architecture, S4 RNA-binding spans 346 to 407 (MQAARVLFTA…GKRKYGRVVL (62 aa)).

It belongs to the class-I aminoacyl-tRNA synthetase family. TyrS type 2 subfamily. In terms of assembly, homodimer.

It is found in the cytoplasm. The catalysed reaction is tRNA(Tyr) + L-tyrosine + ATP = L-tyrosyl-tRNA(Tyr) + AMP + diphosphate + H(+). Its function is as follows. Catalyzes the attachment of tyrosine to tRNA(Tyr) in a two-step reaction: tyrosine is first activated by ATP to form Tyr-AMP and then transferred to the acceptor end of tRNA(Tyr). This chain is Tyrosine--tRNA ligase, found in Symbiobacterium thermophilum (strain DSM 24528 / JCM 14929 / IAM 14863 / T).